Here is a 132-residue protein sequence, read N- to C-terminus: Small ribosomal subunit protein uS8 (132 aa).

Belongs to the universal ribosomal protein uS8 family. In terms of assembly, part of the 30S ribosomal subunit. Contacts proteins S5 and S12.

In terms of biological role, one of the primary rRNA binding proteins, it binds directly to 16S rRNA central domain where it helps coordinate assembly of the platform of the 30S subunit. The sequence is that of Small ribosomal subunit protein uS8 from Roseiflexus castenholzii (strain DSM 13941 / HLO8).